Consider the following 827-residue polypeptide: Glycerol-3-phosphate acyltransferase (827 aa).

The HXXXXD motif motif lies at Cys325 to Met330.

It belongs to the GPAT/DAPAT family.

The protein localises to the cell inner membrane. It carries out the reaction sn-glycerol 3-phosphate + an acyl-CoA = a 1-acyl-sn-glycero-3-phosphate + CoA. Its pathway is phospholipid metabolism; CDP-diacylglycerol biosynthesis; CDP-diacylglycerol from sn-glycerol 3-phosphate: step 1/3. The polypeptide is Glycerol-3-phosphate acyltransferase (Shigella sonnei (strain Ss046)).